Here is a 216-residue protein sequence, read N- to C-terminus: Putative flagellar filament outer layer-like protein (216 aa).

The disordered stretch occupies residues 1–22 (MFAQDAAQTGEQTTQNQGENGN). Over residues 8–22 (QTGEQTTQNQGENGN) the composition is skewed to low complexity.

Its subcellular location is the periplasmic flagellum. It is found in the periplasm. Might be part of the flagella. This Brachyspira hyodysenteriae (strain ATCC 49526 / WA1) protein is Putative flagellar filament outer layer-like protein (flaAL).